The sequence spans 380 residues: DNA replication and repair protein RecF (380 aa).

30 to 37 contacts ATP; that stretch reads GENAQGKT.

It belongs to the RecF family.

The protein resides in the cytoplasm. Functionally, the RecF protein is involved in DNA metabolism; it is required for DNA replication and normal SOS inducibility. RecF binds preferentially to single-stranded, linear DNA. It also seems to bind ATP. This Synechococcus sp. (strain JA-2-3B'a(2-13)) (Cyanobacteria bacterium Yellowstone B-Prime) protein is DNA replication and repair protein RecF.